A 141-amino-acid chain; its full sequence is Galactose-6-phosphate isomerase subunit LacA 1 (141 aa).

This sequence belongs to the LacAB/RpiB family. Heteromultimeric protein consisting of LacA and LacB.

The enzyme catalyses aldehydo-D-galactose 6-phosphate = keto-D-tagatose 6-phosphate. It functions in the pathway carbohydrate metabolism; D-galactose 6-phosphate degradation; D-tagatose 6-phosphate from D-galactose 6-phosphate: step 1/1. The sequence is that of Galactose-6-phosphate isomerase subunit LacA 1 from Streptococcus pyogenes serotype M1.